A 301-amino-acid polypeptide reads, in one-letter code: Ribosomal RNA small subunit methyltransferase A (301 aa).

Residues N23, I25, G50, E72, D97, and N149 each contribute to the S-adenosyl-L-methionine site.

This sequence belongs to the class I-like SAM-binding methyltransferase superfamily. rRNA adenine N(6)-methyltransferase family. RsmA subfamily.

The protein localises to the cytoplasm. The catalysed reaction is adenosine(1518)/adenosine(1519) in 16S rRNA + 4 S-adenosyl-L-methionine = N(6)-dimethyladenosine(1518)/N(6)-dimethyladenosine(1519) in 16S rRNA + 4 S-adenosyl-L-homocysteine + 4 H(+). Functionally, specifically dimethylates two adjacent adenosines (A1518 and A1519) in the loop of a conserved hairpin near the 3'-end of 16S rRNA in the 30S particle. May play a critical role in biogenesis of 30S subunits. This Rickettsia conorii (strain ATCC VR-613 / Malish 7) protein is Ribosomal RNA small subunit methyltransferase A.